We begin with the raw amino-acid sequence, 467 residues long: UDP-N-acetylmuramoylalanine--D-glutamate ligase (467 aa).

115-121 (GTDGKTT) serves as a coordination point for ATP.

Belongs to the MurCDEF family.

The protein resides in the cytoplasm. The catalysed reaction is UDP-N-acetyl-alpha-D-muramoyl-L-alanine + D-glutamate + ATP = UDP-N-acetyl-alpha-D-muramoyl-L-alanyl-D-glutamate + ADP + phosphate + H(+). It functions in the pathway cell wall biogenesis; peptidoglycan biosynthesis. Functionally, cell wall formation. Catalyzes the addition of glutamate to the nucleotide precursor UDP-N-acetylmuramoyl-L-alanine (UMA). The protein is UDP-N-acetylmuramoylalanine--D-glutamate ligase of Chlorobaculum parvum (strain DSM 263 / NCIMB 8327) (Chlorobium vibrioforme subsp. thiosulfatophilum).